Consider the following 601-residue polypeptide: NADH-ubiquinone oxidoreductase chain 5 (601 aa).

Helical transmembrane passes span 3 to 23 (LIMPFSIITLTILTIPIMMSY), 36 to 56 (VTSSVSYAFMTSMIPTMMFLL), 84 to 104 (FFSIIFVSVALFVTWSIMEFS), 114 to 134 (INQFFKYLLLFLITMMILVTA), 140 to 160 (LFIGWEGVGIMSFLLIGWWYG), 171 to 191 (AILYNRIGDIGFILTMAWLLL), 201 to 221 (IFMLKPTNLLPLLGLLVAAAG), 240 to 260 (TPVSALLHSSTMVVAGIFLLV), 272 to 292 (ILTMTLCLGAITTLFTAICAL), 324 to 346 (AFLHICTHAFFKAMLFMCSGSII), 365 to 385 (MPFTSSCLMIGSLALTGMPFL), 404 to 426 (NAWALLITLLATSFTASYSTRLI), 456 to 476 (LALGSIFAGFLISNYIPPLIT), 483 to 503 (LYMKLSALAVTIMGFMVAMGL), and 581 to 601 (LIKLYFMSFIISMTLATMLII).

This sequence belongs to the complex I subunit 5 family.

It is found in the mitochondrion inner membrane. It catalyses the reaction a ubiquinone + NADH + 5 H(+)(in) = a ubiquinol + NAD(+) + 4 H(+)(out). In terms of biological role, core subunit of the mitochondrial membrane respiratory chain NADH dehydrogenase (Complex I) that is believed to belong to the minimal assembly required for catalysis. Complex I functions in the transfer of electrons from NADH to the respiratory chain. The immediate electron acceptor for the enzyme is believed to be ubiquinone. The chain is NADH-ubiquinone oxidoreductase chain 5 (MT-ND5) from Dasypus novemcinctus (Nine-banded armadillo).